The sequence spans 308 residues: MNKELQPKVIFLMGPTASGKTALALELAEKHNCEIISVDSALIYRGMDIGSAKPSADELARGPHRLIDIRDPSESYSAADFRADAITEIEQIISMGKTPVLVGGTMMYFKALLEGLSPLPSADEAIRAEIQAEADEKGWEALHDQLREIDPVSAERIHPNDPQRLSRALEVYRISGKSMTELTQTKSAPLPYDVVQFAIAPRERKVLHDLIAQRFAIMLKQGFLEEVTELKARGDLHLDLPSMRCVGYRQCWQYLDGEFDYDTMVEKAVAATRQLAKRQLTWLRSWPELNWLESGAEGNLVTLMRQCR.

Position 14–21 (14–21 (GPTASGKT)) interacts with ATP. 16-21 (TASGKT) is a binding site for substrate. Interaction with substrate tRNA regions lie at residues 39 to 42 (DSAL), 163 to 167 (QRLSR), and 244 to 249 (RCVGYR).

This sequence belongs to the IPP transferase family. As to quaternary structure, monomer. Mg(2+) is required as a cofactor.

The catalysed reaction is adenosine(37) in tRNA + dimethylallyl diphosphate = N(6)-dimethylallyladenosine(37) in tRNA + diphosphate. In terms of biological role, catalyzes the transfer of a dimethylallyl group onto the adenine at position 37 in tRNAs that read codons beginning with uridine, leading to the formation of N6-(dimethylallyl)adenosine (i(6)A). The protein is tRNA dimethylallyltransferase of Shewanella baltica (strain OS185).